The chain runs to 491 residues: Cytosolic Fe-S cluster assembly factor NAR1 (491 aa).

The [4Fe-4S] cluster site is built by Cys-20, Cys-59, Cys-62, Cys-65, Cys-177, Cys-231, Cys-412, and Cys-416.

Belongs to the NARF family. Interacts with CIA1.

It is found in the cytoplasm. The protein resides in the nucleus. Essential component of a cytosolic Fe/S protein assembly machinery. Required for maturation of extramitochondrial Fe/S proteins. May play a role in the transfer of pre-assembled Fe/S clusters to target apoproteins. The protein is Cytosolic Fe-S cluster assembly factor NAR1 (NAR1) of Saccharomyces cerevisiae (strain ATCC 204508 / S288c) (Baker's yeast).